The primary structure comprises 432 residues: Alpha-enolase (432 aa).

Ser40 serves as a coordination point for Mg(2+). Residues His158 and Glu167 each coordinate substrate. Catalysis depends on Glu210, which acts as the Proton donor. Residues Asp245, Glu293, and Asp318 each contribute to the Mg(2+) site. 2 residues coordinate substrate: Glu293 and Asp318. Catalysis depends on Lys343, which acts as the Proton acceptor. Substrate is bound by residues 370 to 373 (SHRS) and Lys394.

The protein belongs to the enolase family. In terms of assembly, dimer. It depends on Mg(2+) as a cofactor.

It is found in the cytoplasm. It catalyses the reaction (2R)-2-phosphoglycerate = phosphoenolpyruvate + H2O. Its pathway is carbohydrate degradation; glycolysis; pyruvate from D-glyceraldehyde 3-phosphate: step 4/5. Its function is as follows. Multifunctional enzyme that, as well as its role in glycolysis, plays a part in various processes such as growth control, hypoxia tolerance and allergic responses. The polypeptide is Alpha-enolase (Thunnus albacares (Yellowfin tuna)).